We begin with the raw amino-acid sequence, 303 residues long: Succinate--CoA ligase [ADP-forming] subunit alpha (303 aa).

Residues threonine 20–glutamate 23, lysine 46, and isoleucine 108–glutamate 110 contribute to the CoA site. Position 173 (tyrosine 173) interacts with substrate. The Tele-phosphohistidine intermediate role is filled by histidine 259.

This sequence belongs to the succinate/malate CoA ligase alpha subunit family. As to quaternary structure, heterotetramer of two alpha and two beta subunits.

It catalyses the reaction succinate + ATP + CoA = succinyl-CoA + ADP + phosphate. It carries out the reaction GTP + succinate + CoA = succinyl-CoA + GDP + phosphate. It functions in the pathway carbohydrate metabolism; tricarboxylic acid cycle; succinate from succinyl-CoA (ligase route): step 1/1. In terms of biological role, succinyl-CoA synthetase functions in the citric acid cycle (TCA), coupling the hydrolysis of succinyl-CoA to the synthesis of either ATP or GTP and thus represents the only step of substrate-level phosphorylation in the TCA. The alpha subunit of the enzyme binds the substrates coenzyme A and phosphate, while succinate binding and nucleotide specificity is provided by the beta subunit. The chain is Succinate--CoA ligase [ADP-forming] subunit alpha from Mycobacterium bovis (strain ATCC BAA-935 / AF2122/97).